Reading from the N-terminus, the 122-residue chain is Small ribosomal subunit protein uS13 (122 aa).

Positions 96 to 122 are disordered; sequence PVRGQRTRTNARTRKGPKKTVGVRRAK.

It belongs to the universal ribosomal protein uS13 family. In terms of assembly, part of the 30S ribosomal subunit. Forms a loose heterodimer with protein S19. Forms two bridges to the 50S subunit in the 70S ribosome.

Located at the top of the head of the 30S subunit, it contacts several helices of the 16S rRNA. In the 70S ribosome it contacts the 23S rRNA (bridge B1a) and protein L5 of the 50S subunit (bridge B1b), connecting the 2 subunits; these bridges are implicated in subunit movement. Contacts the tRNAs in the A and P-sites. This chain is Small ribosomal subunit protein uS13, found in Halothermothrix orenii (strain H 168 / OCM 544 / DSM 9562).